The following is a 195-amino-acid chain: Heat shock protein beta-8 (195 aa).

At Ser-56 the chain carries Phosphoserine. Phosphothreonine is present on Thr-62. Asymmetric dimethylarginine occurs at positions 70 and 77. The 112-residue stretch at 73 to 184 folds into the sHSP domain; it reads TATARFGVPA…TFGESSFNNE (112 aa). The tract at residues 175–195 is disordered; it reads TFGESSFNNELPQDSQEVTCT. A compositionally biased stretch (polar residues) spans 176-195; sequence FGESSFNNELPQDSQEVTCT.

It belongs to the small heat shock protein (HSP20) family. Monomer. Forms a ternary complex with BAG3 and HSPA1A. Component of the chaperone-assisted selective autophagy (CASA) complex consisting of BAG3, HSPA8/HSC70, HSPB8 and STUB1/CHIP. Interacts with HSPB1. Interacts with DNAJB6. Interacts with BAG3. Post-translationally, phosphorylated.

It localises to the cytoplasm. Its subcellular location is the nucleus. Its function is as follows. Involved in the chaperone-assisted selective autophagy (CASA), a crucial process for protein quality control, particularly in mechanical strained cells and tissues such as muscle. Displays temperature-dependent chaperone activity. The chain is Heat shock protein beta-8 (HSPB8) from Macaca mulatta (Rhesus macaque).